The chain runs to 159 residues: Probable chemoreceptor glutamine deamidase CheD 1 (159 aa).

The protein belongs to the CheD family.

It carries out the reaction L-glutaminyl-[protein] + H2O = L-glutamyl-[protein] + NH4(+). Probably deamidates glutamine residues to glutamate on methyl-accepting chemotaxis receptors (MCPs), playing an important role in chemotaxis. In Methanosarcina acetivorans (strain ATCC 35395 / DSM 2834 / JCM 12185 / C2A), this protein is Probable chemoreceptor glutamine deamidase CheD 1.